The chain runs to 147 residues: Hemoglobin subunit beta (147 aa).

Ser2 carries the N-acetylserine modification. The region spanning Phe3 to His147 is the Globin domain. Position 45 is a phosphoserine (Ser45). Lys60 carries the post-translational modification N6-acetyllysine. A heme b-binding site is contributed by His64. At Lys83 the chain carries N6-acetyllysine. Residue His93 participates in heme b binding. Cys94 carries the post-translational modification S-nitrosocysteine.

The protein belongs to the globin family. Heterotetramer of two alpha chains and two beta chains. As to expression, red blood cells.

Its function is as follows. Involved in oxygen transport from the lung to the various peripheral tissues. This Panthera pardus orientalis (Amur leopard) protein is Hemoglobin subunit beta (HBB).